The chain runs to 129 residues: Large ribosomal subunit protein uL22 (129 aa).

The protein belongs to the universal ribosomal protein uL22 family. As to quaternary structure, part of the 50S ribosomal subunit.

Functionally, this protein binds specifically to 23S rRNA; its binding is stimulated by other ribosomal proteins, e.g. L4, L17, and L20. It is important during the early stages of 50S assembly. It makes multiple contacts with different domains of the 23S rRNA in the assembled 50S subunit and ribosome. The globular domain of the protein is located near the polypeptide exit tunnel on the outside of the subunit, while an extended beta-hairpin is found that lines the wall of the exit tunnel in the center of the 70S ribosome. The sequence is that of Large ribosomal subunit protein uL22 from Agrobacterium fabrum (strain C58 / ATCC 33970) (Agrobacterium tumefaciens (strain C58)).